The primary structure comprises 103 residues: ATP-dependent Clp protease adapter protein ClpS 2 (103 aa).

The protein belongs to the ClpS family. As to quaternary structure, binds to the N-terminal domain of the chaperone ClpA.

Functionally, involved in the modulation of the specificity of the ClpAP-mediated ATP-dependent protein degradation. The chain is ATP-dependent Clp protease adapter protein ClpS 2 from Agrobacterium fabrum (strain C58 / ATCC 33970) (Agrobacterium tumefaciens (strain C58)).